A 153-amino-acid chain; its full sequence is Catabolic 3-dehydroquinase (153 aa).

Catalysis depends on Tyr24, which acts as the Proton acceptor. 3 residues coordinate substrate: Asn75, His81, and Asp88. His101 serves as the catalytic Proton donor. Substrate is bound by residues 102–103 (VS) and Arg112.

Belongs to the type-II 3-dehydroquinase family. In terms of assembly, homododecamer. Adopts a ring-like structure, composed of an arrangement of two hexameric rings stacked on top of one another.

The enzyme catalyses 3-dehydroquinate = 3-dehydroshikimate + H2O. The protein operates within aromatic compound metabolism; 3,4-dihydroxybenzoate biosynthesis; 3,4-dihydroxybenzoate from 3-dehydroquinate: step 1/2. In terms of biological role, is involved in the catabolism of quinate. Allows the utilization of quinate as carbon source via the beta-ketoadipate pathway. In Aspergillus oryzae (strain ATCC 42149 / RIB 40) (Yellow koji mold), this protein is Catabolic 3-dehydroquinase.